The primary structure comprises 599 residues: Elongation factor 4 (599 aa).

The 183-residue stretch at 5–187 (SHIRNFSIVA…SIVQNLPAPK (183 aa)) folds into the tr-type G domain. GTP-binding positions include 17–22 (DHGKST) and 134–137 (NKID).

Belongs to the TRAFAC class translation factor GTPase superfamily. Classic translation factor GTPase family. LepA subfamily.

It is found in the cell inner membrane. It catalyses the reaction GTP + H2O = GDP + phosphate + H(+). Required for accurate and efficient protein synthesis under certain stress conditions. May act as a fidelity factor of the translation reaction, by catalyzing a one-codon backward translocation of tRNAs on improperly translocated ribosomes. Back-translocation proceeds from a post-translocation (POST) complex to a pre-translocation (PRE) complex, thus giving elongation factor G a second chance to translocate the tRNAs correctly. Binds to ribosomes in a GTP-dependent manner. In Roseobacter denitrificans (strain ATCC 33942 / OCh 114) (Erythrobacter sp. (strain OCh 114)), this protein is Elongation factor 4.